The chain runs to 216 residues: Uracil phosphoribosyltransferase (216 aa).

5-phospho-alpha-D-ribose 1-diphosphate is bound by residues Arg-85, Arg-110, and 135–143; that span reads DPMVATGYS. Uracil contacts are provided by residues Ile-200 and 205–207; that span reads GDA. 5-phospho-alpha-D-ribose 1-diphosphate is bound at residue Asp-206.

It belongs to the UPRTase family. Mg(2+) is required as a cofactor.

It catalyses the reaction UMP + diphosphate = 5-phospho-alpha-D-ribose 1-diphosphate + uracil. It functions in the pathway pyrimidine metabolism; UMP biosynthesis via salvage pathway; UMP from uracil: step 1/1. Its activity is regulated as follows. Allosterically activated by GTP. In terms of biological role, catalyzes the conversion of uracil and 5-phospho-alpha-D-ribose 1-diphosphate (PRPP) to UMP and diphosphate. In Burkholderia pseudomallei (strain 668), this protein is Uracil phosphoribosyltransferase.